The following is a 48-amino-acid chain: Delta-stichotoxin-Hcr1e (48 aa).

Intrachain disulfides connect Cys3–Cys43, Cys5–Cys33, and Cys26–Cys44.

Belongs to the sea anemone sodium channel inhibitory toxin family. Type II subfamily.

Its subcellular location is the secreted. It is found in the nematocyst. Functionally, binds to site 3 of voltage-gated sodium channels and inhibits the inactivation process. This Radianthus crispa (Leathery sea anemone) protein is Delta-stichotoxin-Hcr1e.